Here is a 220-residue protein sequence, read N- to C-terminus: Ribosomal RNA large subunit methyltransferase E (220 aa).

Glycine 64, tryptophan 66, aspartate 92, aspartate 108, and aspartate 133 together coordinate S-adenosyl-L-methionine. The Proton acceptor role is filled by lysine 173.

Belongs to the class I-like SAM-binding methyltransferase superfamily. RNA methyltransferase RlmE family.

Its subcellular location is the cytoplasm. It catalyses the reaction uridine(2552) in 23S rRNA + S-adenosyl-L-methionine = 2'-O-methyluridine(2552) in 23S rRNA + S-adenosyl-L-homocysteine + H(+). Specifically methylates the uridine in position 2552 of 23S rRNA at the 2'-O position of the ribose in the fully assembled 50S ribosomal subunit. This is Ribosomal RNA large subunit methyltransferase E from Acidovorax sp. (strain JS42).